We begin with the raw amino-acid sequence, 226 residues long: 2-C-methyl-D-erythritol 4-phosphate cytidylyltransferase (226 aa).

Belongs to the IspD/TarI cytidylyltransferase family. IspD subfamily.

The catalysed reaction is 2-C-methyl-D-erythritol 4-phosphate + CTP + H(+) = 4-CDP-2-C-methyl-D-erythritol + diphosphate. The protein operates within isoprenoid biosynthesis; isopentenyl diphosphate biosynthesis via DXP pathway; isopentenyl diphosphate from 1-deoxy-D-xylulose 5-phosphate: step 2/6. Catalyzes the formation of 4-diphosphocytidyl-2-C-methyl-D-erythritol from CTP and 2-C-methyl-D-erythritol 4-phosphate (MEP). The sequence is that of 2-C-methyl-D-erythritol 4-phosphate cytidylyltransferase from Bacillus cereus (strain ATCC 14579 / DSM 31 / CCUG 7414 / JCM 2152 / NBRC 15305 / NCIMB 9373 / NCTC 2599 / NRRL B-3711).